Consider the following 146-residue polypeptide: Mediator of RNA polymerase II transcription subunit 10 (146 aa).

It belongs to the Mediator complex subunit 10 family. As to quaternary structure, component of the Mediator complex.

The protein localises to the nucleus. Component of the Mediator complex, a coactivator involved in the regulated transcription of nearly all RNA polymerase II-dependent genes. Mediator functions as a bridge to convey information from gene-specific regulatory proteins to the basal RNA polymerase II transcription machinery. Mediator is recruited to promoters by direct interactions with regulatory proteins and serves as a scaffold for the assembly of a functional preinitiation complex with RNA polymerase II and the general transcription factors. The sequence is that of Mediator of RNA polymerase II transcription subunit 10 (NUT2) from Scheffersomyces stipitis (strain ATCC 58785 / CBS 6054 / NBRC 10063 / NRRL Y-11545) (Yeast).